The chain runs to 522 residues: Target of rapamycin complex 2 subunit MAPKAP1 (522 aa).

The segment at 2–184 (GFLDNPTIIL…KKIDVYLPLH (183 aa)) is interaction with MAP3K2. Residues 2 to 267 (GFLDNPTIIL…GFSTLALVEK (266 aa)) form an interaction with NBN region. T86 carries the post-translational modification Phosphothreonine. Phosphoserine occurs at positions 128, 186, 315, and 356. A CRIM domain is found at 139–267 (QSILSVRLEQ…GFSTLALVEK (129 aa)). The segment at 279-353 (LFVRINAAHG…QSAWEFCLVR (75 aa)) is SIN1-type RBD. One can recognise an SIN1-type PH domain in the interval 382 to 487 (HYKSFKVSMI…IVLKVNYILE (106 aa)). R393 lines the a 1,2-diacyl-sn-glycero-3-phospho-(1D-myo-inositol-3,4,5-trisphosphate) pocket. Residue T398 is modified to Phosphothreonine. Residues K428 and K464 each coordinate a 1,2-diacyl-sn-glycero-3-phospho-(1D-myo-inositol-3,4,5-trisphosphate). Positions 468-522 (FESDAATVNEIVLKVNYILESRASTARADYFAQKQRKLNRRTSFSFQKEKKSGQQ) are interaction with ATF2. Position 510 is a phosphoserine (S510).

This sequence belongs to the SIN1 family. As to quaternary structure, component of the mechanistic target of rapamycin complex 2 (mTORC2), consisting in two heterotretramers composed of MTOR, MLST8, RICTOR and MAPKAP1/SIN1. The mTORC2 core complex associates with PRR5/PROTOR1 and/or PRR5L/PROTOR2. Contrary to mTORC1, mTORC2 does not bind to and is not sensitive to FKBP12-rapamycin. Interacts with MAP3K2. Interacts with ATF2. Interacts with MAPK8. Interacts with GTP-bound HRAS and KRAS; inhibiting their activity. Interacts with IFNAR2. Post-translationally, phosphorylation at Ser-128 by PKC promotes relocalization to the perinuclear region, where the mTORC2 complex specifically mediates phosphorylation of SGK1. Phosphorylated at Thr-86 by AKT1 or RPS6KB1 in the presence of growth factors; the effect of this phosphorylation is however unclear. According to two studies, phosphorylation at Thr-86 by AKT1 is part of a positive feedback loop that increases mTORC2 activation. According to another study, phosphorylation at Thr-86 and Thr-398 by RPS6KB1 promotes dissociation from the mTORC2 complex, leading to inhibit mTORC2 signaling. Present in the lumenal epithelium and glandular epithelium of endometrium (at protein level).

The protein localises to the cell membrane. The protein resides in the cytoplasmic vesicle. Its subcellular location is the endoplasmic reticulum membrane. It is found in the early endosome membrane. It localises to the late endosome membrane. The protein localises to the lysosome membrane. The protein resides in the golgi apparatus membrane. Its subcellular location is the mitochondrion outer membrane. It is found in the cytoplasm. It localises to the perinuclear region. The protein localises to the nucleus. Its activity is regulated as follows. Phosphatidylinositol 3,4,5-trisphosphate (PI(3,4,5)P3) promotes MTOR activation by relieving MAPKAP1/SIN1-mediated inhibition of MTOR that takes place in absence of PI(3,4,5)P3. Its function is as follows. Component of the mechanistic target of rapamycin complex 2 (mTORC2), which transduces signals from growth factors to pathways involved in proliferation, cytoskeletal organization, lipogenesis and anabolic output. In response to growth factors, mTORC2 phosphorylates and activates AGC protein kinase family members, including AKT (AKT1, AKT2 and AKT3), PKC (PRKCA, PRKCB and PRKCE) and SGK1. In contrast to mTORC1, mTORC2 is nutrient-insensitive. Within the mTORC2 complex, MAPKAP1/SIN1 acts as a substrate adapter which recognizes and binds AGC protein kinase family members for phosphorylation by MTOR. mTORC2 plays a critical role in AKT1 activation by mediating phosphorylation of different sites depending on the context, such as 'Thr-450', 'Ser-473', 'Ser-477' or 'Thr-479', facilitating the phosphorylation of the activation loop of AKT1 on 'Thr-308' by PDPK1/PDK1 which is a prerequisite for full activation. mTORC2 catalyzes the phosphorylation of SGK1 at 'Ser-422' and of PRKCA on 'Ser-657'. The mTORC2 complex also phosphorylates various proteins involved in insulin signaling, such as FBXW8 and IGF2BP1. mTORC2 acts upstream of Rho GTPases to regulate the actin cytoskeleton, probably by activating one or more Rho-type guanine nucleotide exchange factors. mTORC2 promotes the serum-induced formation of stress-fibers or F-actin. MAPKAP1 inhibits MAP3K2 by preventing its dimerization and autophosphorylation. Inhibits HRAS and KRAS independently of mTORC2 complex. Enhances osmotic stress-induced phosphorylation of ATF2 and ATF2-mediated transcription. Involved in ciliogenesis, regulates cilia length through its interaction with CCDC28B independently of mTORC2 complex. In Ovis aries (Sheep), this protein is Target of rapamycin complex 2 subunit MAPKAP1 (MAPKAP1).